A 914-amino-acid chain; its full sequence is Protein translocase subunit SecA (914 aa).

ATP-binding positions include glutamine 87, 105–109 (GEGKT), and aspartate 508. The Zn(2+) site is built by cysteine 898, cysteine 900, cysteine 909, and histidine 910.

It belongs to the SecA family. Monomer and homodimer. Part of the essential Sec protein translocation apparatus which comprises SecA, SecYEG and auxiliary proteins SecDF-YajC and YidC. Zn(2+) is required as a cofactor.

The protein localises to the cell inner membrane. It is found in the cytoplasm. The catalysed reaction is ATP + H2O + cellular proteinSide 1 = ADP + phosphate + cellular proteinSide 2.. Functionally, part of the Sec protein translocase complex. Interacts with the SecYEG preprotein conducting channel. Has a central role in coupling the hydrolysis of ATP to the transfer of proteins into and across the cell membrane, serving both as a receptor for the preprotein-SecB complex and as an ATP-driven molecular motor driving the stepwise translocation of polypeptide chains across the membrane. This chain is Protein translocase subunit SecA, found in Xylella fastidiosa (strain M12).